A 110-amino-acid polypeptide reads, in one-letter code: Small ubiquitin-related modifier 3 (110 aa).

Glycyl lysine isopeptide (Lys-Gly) (interchain with G-Cter in SUMO2) cross-links involve residues Lys5 and Lys7. A Glycyl lysine isopeptide (Lys-Gly) (interchain with G-Cter in SUMO); alternate cross-link involves residue Lys11. A Glycyl lysine isopeptide (Lys-Gly) (interchain with G-Cter in SUMO2); alternate cross-link involves residue Lys11. The 78-residue stretch at 15–92 folds into the Ubiquitin-like domain; that stretch reads DHINLKVAGQ…IDVFQQQTGG (78 aa). The span at 88–101 shows a compositional bias: polar residues; that stretch reads QQTGGSASRGSVPT. Positions 88-110 are disordered; that stretch reads QQTGGSASRGSVPTPNRCPDLCY. A Glycyl lysine isopeptide (Gly-Lys) (interchain with K-? in acceptor proteins) cross-link involves residue Gly92. The propeptide occupies 93–110; that stretch reads SASRGSVPTPNRCPDLCY.

Belongs to the ubiquitin family. SUMO subfamily. In terms of assembly, interacts with SAE2 and UBE2I. Covalently attached to a number of proteins. Interacts with USP25 (via ts SIM domain); the interaction sumoylates USP25 and inhibits its ubiquitin hydrolyzing activity. Interacts with BMAL1. In terms of processing, polymeric chains can be formed through Lys-11 cross-linking. Post-translationally, cleavage of precursor form by SENP1, SENP2 or SENP5 is necessary for function.

The protein localises to the cytoplasm. The protein resides in the nucleus. It is found in the PML body. In terms of biological role, ubiquitin-like protein which can be covalently attached to target lysines either as a monomer or as a lysine-linked polymer. Does not seem to be involved in protein degradation and may function as an antagonist of ubiquitin in the degradation process. Plays a role in a number of cellular processes such as nuclear transport, DNA replication and repair, mitosis and signal transduction. Covalent attachment to its substrates requires prior activation by the E1 complex SAE1-SAE2 and linkage to the E2 enzyme UBE2I, and can be promoted by an E3 ligase such as PIAS1-4, RANBP2 or CBX4. Plays a role in the regulation of sumoylation status of SETX. The polypeptide is Small ubiquitin-related modifier 3 (Mus musculus (Mouse)).